The chain runs to 28 residues: Metallothionein-like protein type 2 LSC210 (28 aa).

The protein belongs to the metallothionein superfamily. Type 15 family.

In terms of biological role, metallothioneins have a high content of cysteine residues that bind various heavy metals. In Brassica napus (Rape), this protein is Metallothionein-like protein type 2 LSC210 (LSC210).